The sequence spans 519 residues: Cytochrome P450 monooxygenase FPY7 (519 aa).

A helical membrane pass occupies residues 12–34 (SLSLRWKIIVTLLAIYTLRIIGT). Residue C465 coordinates heme.

This sequence belongs to the cytochrome P450 family. Heme is required as a cofactor.

The protein resides in the membrane. Its pathway is secondary metabolite biosynthesis. Cytochrome P450 monooxygenase; part of the gene cluster that mediates the biosynthesis of the gamma-pyrones fusapyrone (FPY) and deoxyfusapyrone (dFPY). FPY is an undecaketide and thus likely synthesized by the polyketide synthase FPY1 from acetyl-CoA functioning as starter unit and the addition of 10 malonyl-CoA extender units by successive Claisen-condensations. Next to this, FPY shares some rare features: C-glycosylated 4-deoxyglucose at C-3, a gem-dimethyl group at C-13, and an alpha-beta to beta-gamma double bond shift at C-20. During FPY biosynthesis mono-C-methyl groups are transferred to the tetra-, penta-, hexa- and heptaketide, while two C-methyl groups are transferred to the nonaketide, suggesting that the CMet domain is programmed to selectively catalyze two successive C-alpha-methylation reactions of the nonaketide, while other alpha-carbons are non- or mono-methylated only. While the origin of the 4'-deoxyglucose moiety remains opaque, its transfer to C-3 is most likely mediated by the C-glycosyltransferase FPY2. Next to this, the hydroxyl group present at C-33 and discriminating between FPY and dFPY, is likely to be installed by the cytochrome P450 monooxygenase FPY7. No putative function can be predicted for the remaining genes FPY3-FPY6. This Fusarium mangiferae (Mango malformation disease fungus) protein is Cytochrome P450 monooxygenase FPY7.